Consider the following 81-residue polypeptide: Cytochrome c6 (81 aa).

Heme c is bound by residues Cys10, Cys13, His14, and Met54.

The protein belongs to the cytochrome c family. PetJ subfamily. In terms of assembly, monomer. In terms of processing, binds 1 heme c group covalently per subunit.

The protein localises to the cellular thylakoid lumen. Its function is as follows. Functions as an electron carrier between membrane-bound cytochrome b6-f and photosystem I in oxygenic photosynthesis. The polypeptide is Cytochrome c6 (petJ) (Microcystis aeruginosa).